We begin with the raw amino-acid sequence, 445 residues long: tRNA-2-methylthio-N(6)-dimethylallyladenosine synthase (445 aa).

One can recognise an MTTase N-terminal domain in the interval 3–124 (KKLYIKTYGC…LPELISKVVR (122 aa)). The [4Fe-4S] cluster site is built by cysteine 12, cysteine 48, cysteine 87, cysteine 162, cysteine 166, and cysteine 169. The region spanning 148-380 (YPQGTSAFIS…QQELMAQQLA (233 aa)) is the Radical SAM core domain. In terms of domain architecture, TRAM spans 383–445 (TSCVGSTMKV…SLNSLTGEIL (63 aa)).

It belongs to the methylthiotransferase family. MiaB subfamily. As to quaternary structure, monomer. It depends on [4Fe-4S] cluster as a cofactor.

Its subcellular location is the cytoplasm. It carries out the reaction N(6)-dimethylallyladenosine(37) in tRNA + (sulfur carrier)-SH + AH2 + 2 S-adenosyl-L-methionine = 2-methylsulfanyl-N(6)-dimethylallyladenosine(37) in tRNA + (sulfur carrier)-H + 5'-deoxyadenosine + L-methionine + A + S-adenosyl-L-homocysteine + 2 H(+). Catalyzes the methylthiolation of N6-(dimethylallyl)adenosine (i(6)A), leading to the formation of 2-methylthio-N6-(dimethylallyl)adenosine (ms(2)i(6)A) at position 37 in tRNAs that read codons beginning with uridine. This Rickettsia conorii (strain ATCC VR-613 / Malish 7) protein is tRNA-2-methylthio-N(6)-dimethylallyladenosine synthase.